The chain runs to 135 residues: UPF0738 protein Aflv_2116 (135 aa).

Belongs to the UPF0738 family.

The polypeptide is UPF0738 protein Aflv_2116 (Anoxybacillus flavithermus (strain DSM 21510 / WK1)).